Consider the following 248-residue polypeptide: Transmembrane protein 182 (248 aa).

Positions 1–26 are cleaved as a signal peptide; the sequence is MKIHVAGFFAGLFGALATLFILLSFG. The Extracellular segment spans residues 27–136; the sequence is TDYWLLASET…IIYRGFWSVS (110 aa). 2 N-linked (GlcNAc...) asparagine glycosylation sites follow: asparagine 66 and asparagine 119. The helical transmembrane segment at 137-157 threads the bilayer; that stretch reads MLVGVAAVVAGGFIIICAAPF. Topologically, residues 158-167 are cytoplasmic; that stretch reads ASHRLYKAGG. A helical membrane pass occupies residues 168–188; sequence GLYLISGFFVLVVTAMYVIWI. Residues 189–218 lie on the Extracellular side of the membrane; that stretch reads DVLDVISLYTEYQKLNKCADFELNKTYGLS. The N-linked (GlcNAc...) asparagine glycan is linked to asparagine 212. Residues 219–239 form a helical membrane-spanning segment; the sequence is FMFAPVGVFFCFLSGLLFLVI. The Cytoplasmic portion of the chain corresponds to 240–248; it reads GRTVHHQYN.

It belongs to the TMEM182 family.

The protein localises to the cell membrane. Functionally, may negatively regulate myogenesis and skeletal muscle regeneration. The protein is Transmembrane protein 182 (tmem182a) of Danio rerio (Zebrafish).